Here is a 387-residue protein sequence, read N- to C-terminus: MPPRVVRLPSLTGLRWFAALAVFACHIAQQQFFADQQVGTALLHITTLGSIAVSVFFLLSGFVLAWSARDKDSVTTFWRRRFAKIYPLHLVTFLIAGVIIFSLAEPTLPGGSVWDGLVPDLLLVQSWLPEPTIIAGFNTPSWSLSCEFAFYLTFPLWYRLVRKIPVRRLWWCAAGIAAAVICVPFVTSQFPASAETAPGMPLNELWFACWLPPVRMLEFVLGIVMALILRTGVWRGPGVVSSALLLAAAYGVTQVVPPMFTIAACSIVPAALLITALANADVQGLRTGLRSAVLVRLGEWSFAFYLVHFMVIRYGHRLMGGELGYARQWSTASAGALALAMLAVAIVAGGLLHTVVENPCMRLLGRRRPVATAPDPATDEAPKLTRA.

10 helical membrane passes run 8–28 (LPSLTGLRWFAALAVFACHIA), 45–65 (ITTLGSIAVSVFFLLSGFVLA), 85–105 (IYPLHLVTFLIAGVIIFSLAE), 139–161 (TPSWSLSCEFAFYLTFPLWYRLV), 170–190 (WWCAAGIAAAVICVPFVTSQF), 209–229 (CWLPPVRMLEFVLGIVMALIL), 236–256 (GPGVVSSALLLAAAYGVTQVV), 258–278 (PMFTIAACSIVPAALLITALA), 292–312 (AVLVRLGEWSFAFYLVHFMVI), and 336–356 (ALALAMLAVAIVAGGLLHTVV).

Belongs to the acyltransferase 3 family.

It is found in the cell membrane. Its function is as follows. Catalyzes the acylation of the mycaminose sugar during midecamycin biosynthesis. The polypeptide is Acyltransferase MdmB (mdmB) (Streptomyces mycarofaciens).